The primary structure comprises 744 residues: Protein zyg-11 homolog B (744 aa).

LRR repeat units follow at residues 185-208, 216-236, and 237-261; these read LPRL…LACK, MHHL…VREL, and KHLN…LLEQ.

This sequence belongs to the zyg-11 family. In terms of assembly, interacts with ELOC/Elongin C. Part of an E3 ubiquitin ligase complex including ZYG11B, CUL2 and Elongin BC.

Its function is as follows. Serves as substrate adapter subunit in the E3 ubiquitin ligase complex ZYG11B-CUL2-Elongin BC. Acts redudantly with ZER1 to target substrates bearing N-terminal glycine degrons for proteasomal degradation. Involved in the clearance of proteolytic fragments generated by caspase cleavage during apoptosis since N-terminal glycine degrons are strongly enriched at caspase cleavage sites. Also important in the quality control of protein N-myristoylation in which N-terminal glycine degrons are conditionally exposed after a failure of N-myristoylation. The chain is Protein zyg-11 homolog B from Mus musculus (Mouse).